A 1149-amino-acid polypeptide reads, in one-letter code: Potassium channel subfamily U member 1 (1149 aa).

Topologically, residues 1–24 (MFQTKLRNESWEDLQKMSCTTEIQ) are extracellular. A helical membrane pass occupies residues 25 to 45 (VAFILSSFMTFISGLIILLIF). At 46–101 (RLIWRTVKKWQIIKGTGIILELFTSGSIRRNHVRSLHFHGRFRDRIEMLLSAQTFV) the chain is on the cytoplasmic side. The chain crosses the membrane as a helical span at residues 102–122 (GQVLVILVFVLSIGSLIIYFI). Topologically, residues 123 to 138 (NSADPVGSCSSYEDKT) are extracellular. Residues 139 to 159 (IPVDLVFNAFFSFYFGLRFMA) form a helical membrane-spanning segment. At 160-163 (ADDK) the chain is on the cytoplasmic side. A helical membrane pass occupies residues 164–184 (IKFWLEMNSIVDIFTIPPTFI). The Extracellular segment spans residues 185–188 (SYYL). A helical; Voltage-sensor transmembrane segment spans residues 189–209 (KSNWLGLRFLRALRLLELPRI). Residues 210-226 (LQILRAIKTSNSVKFSK) lie on the Cytoplasmic side of the membrane. Residues 227 to 247 (LLSIVLSTWFTAAGFIHLVEN) form a helical membrane-spanning segment. Residues 248–259 (SGDPWLKGRNSQ) are Extracellular-facing. Residues 260 to 282 (NISYFDSVYLVMATTSTVGFGDV) constitute an intramembrane region (pore-forming). The Selectivity for potassium signature appears at 276 to 279 (TVGF). At 283–291 (VAKTSLGRT) the chain is on the extracellular side. Residues 292–312 (FIIFFTLGSLILFANYIPEMV) traverse the membrane as a helical segment. Residues 313 to 1149 (ELFANKRKYT…EDPFAYSEPL (837 aa)) lie on the Cytoplasmic side of the membrane. RCK N-terminal domains are found at residues 331-473 (KKFI…DNII) and 713-884 (RNHI…EGSL). Positions 829 to 845 (IDSSSDSSPSVSEETAS) are enriched in low complexity. Disordered regions lie at residues 829 to 851 (IDSS…NGHN) and 1106 to 1149 (ARNQ…SEPL). Residues 1106–1120 (ARNQIRTNSSITSQK) are compositionally biased toward polar residues.

This sequence belongs to the potassium channel family. Calcium-activated (TC 1.A.1.3) subfamily. KCa5.1/KCNU1 sub-subfamily. Homotetramer; which constitutes the calcium-activated potassium channel. Interacts with LRRC52; this interaction changes some channel gating properties, such as shifting gating to more negative potentials at a given pH. Testis-specific.

It is found in the cell membrane. Its subcellular location is the cell projection. The protein localises to the cilium. It localises to the flagellum membrane. The enzyme catalyses K(+)(in) = K(+)(out). With respect to regulation, regulated by changes in cytosolic pH; activated by alkalization. VU0546110 acts as a selective inhibitor. The auxiliary subunit LRRC52 shifts the activation of KCNU1 to more negative potentials at a given pH. Functionally, testis-specific potassium channel activated by both intracellular pH and membrane voltage that mediates export of K(+). Represents the primary spermatozoan K(+) current. The channel underlies a pH-triggered membrane hyperpolarization during the process of sperm capacitation, as sperm encounter the alkaline environment near the ovum in the female reproductive tract, thereby playing an essential for male fertility. The protein is Potassium channel subfamily U member 1 (KCNU1) of Macaca fascicularis (Crab-eating macaque).